The primary structure comprises 779 residues: FAD-dependent monooxygenase BOA8 (779 aa).

FAD-binding residues include Glu85, Arg128, Asp331, and Ala344. Transmembrane regions (helical) follow at residues 471–491 (AQLALPLILIALWFFWKKTPE), 504–524 (VKLDMLSSIANAIPFATIWTI), 542–562 (AFLLLAQKLGIELVAPIYFFF), 587–607 (ILPLAILSIFLGPSYCIWSSI), 618–638 (NAWYWYPVYLTMFLRILKFIV), 665–685 (ILICAAFYLYGSLSSSTSIAF), and 742–762 (LILTIXLSSTFLAGPGVGLIV).

It belongs to the paxM FAD-dependent monooxygenase family. FAD is required as a cofactor.

It is found in the membrane. It functions in the pathway polyketide biosynthesis. Its function is as follows. FAD-dependent monooxygenase; part of the gene cluster B that mediates the biosynthesis of botcinic acid and its botcinin derivatives, acetate-derived polyketides that contribute to virulence when combined with the sesquiterpene botrydial. Botcinic acid and its derivatives have been shown to induce chlorosis and necrosis during host plant infection, but also have antifungal activities. Two polyketide synthases, BOA6 and BOA9, are involved in the biosynthesis of botcinins. BOA6 mediates the formation of the per-methylated tetraketide core by condensation of four units of malonyl-CoA with one unit of acetyl-CoA, which would be methylated in activated methylene groups to yield a bicyclic acid intermediate that could then either be converted to botrylactone derivatives or lose the starter acetate unit through a retro-Claisen type C-C bond cleavage to yield botcinin derivatives. The second polyketide synthase, BOA9, is probably required for the biosynthesis of the tetraketide side chain of botcinins. The methyltransferase (MT) domain within BOA6 is probably responsible for the incorporation of four methyl groups. The trans-enoyl reductase BOA5 might take over the enoyl reductase function of BOA6 that misses an ER domain. The monooxygenases BOA2, BOA3 and BOA4 might be involved in further hydroxylations at C4, C5 and C8, whereas BOA7, close to BOA9, could potentially be involved in the hydroxylation at C4 in the side chain of botcinins. The polypeptide is FAD-dependent monooxygenase BOA8 (Botryotinia fuckeliana (strain B05.10) (Noble rot fungus)).